The following is a 337-amino-acid chain: DNA-directed RNA polymerase subunit alpha (337 aa).

Residues 1–233 (MVREEIAEST…DLFVPFLHAE (233 aa)) form an alpha N-terminal domain (alpha-NTD) region. An alpha C-terminal domain (alpha-CTD) region spans residues 266–337 (GIPLKYIFID…FAVDLPKVLI (72 aa)).

Belongs to the RNA polymerase alpha chain family. As to quaternary structure, in plastids the minimal PEP RNA polymerase catalytic core is composed of four subunits: alpha, beta, beta', and beta''. When a (nuclear-encoded) sigma factor is associated with the core the holoenzyme is formed, which can initiate transcription.

Its subcellular location is the plastid. It localises to the chloroplast. It catalyses the reaction RNA(n) + a ribonucleoside 5'-triphosphate = RNA(n+1) + diphosphate. DNA-dependent RNA polymerase catalyzes the transcription of DNA into RNA using the four ribonucleoside triphosphates as substrates. The protein is DNA-directed RNA polymerase subunit alpha of Dioscorea elephantipes (Elephant's foot yam).